Consider the following 302-residue polypeptide: UDP-N-acetylenolpyruvoylglucosamine reductase (302 aa).

The FAD-binding PCMH-type domain maps to 27–192; the sequence is KTGGPADYVA…VSVTFGLKPG (166 aa). Arg-171 is a catalytic residue. Catalysis depends on Ser-221, which acts as the Proton donor. Glu-291 is a catalytic residue.

Belongs to the MurB family. FAD is required as a cofactor.

Its subcellular location is the cytoplasm. It catalyses the reaction UDP-N-acetyl-alpha-D-muramate + NADP(+) = UDP-N-acetyl-3-O-(1-carboxyvinyl)-alpha-D-glucosamine + NADPH + H(+). It participates in cell wall biogenesis; peptidoglycan biosynthesis. In terms of biological role, cell wall formation. In Lactiplantibacillus plantarum (strain ATCC BAA-793 / NCIMB 8826 / WCFS1) (Lactobacillus plantarum), this protein is UDP-N-acetylenolpyruvoylglucosamine reductase.